The following is a 417-amino-acid chain: NADH-quinone oxidoreductase subunit D (417 aa).

It belongs to the complex I 49 kDa subunit family. In terms of assembly, NDH-1 is composed of 14 different subunits. Subunits NuoB, C, D, E, F, and G constitute the peripheral sector of the complex.

It is found in the cell inner membrane. It carries out the reaction a quinone + NADH + 5 H(+)(in) = a quinol + NAD(+) + 4 H(+)(out). Its function is as follows. NDH-1 shuttles electrons from NADH, via FMN and iron-sulfur (Fe-S) centers, to quinones in the respiratory chain. The immediate electron acceptor for the enzyme in this species is believed to be ubiquinone. Couples the redox reaction to proton translocation (for every two electrons transferred, four hydrogen ions are translocated across the cytoplasmic membrane), and thus conserves the redox energy in a proton gradient. The chain is NADH-quinone oxidoreductase subunit D from Alkalilimnicola ehrlichii (strain ATCC BAA-1101 / DSM 17681 / MLHE-1).